Consider the following 284-residue polypeptide: Pantothenate synthetase (284 aa).

32–39 contacts ATP; the sequence is MGALHDGH. Catalysis depends on H39, which acts as the Proton donor. A (R)-pantoate-binding site is contributed by Q63. Beta-alanine is bound at residue Q63. An ATP-binding site is contributed by 149–152; it reads GEKD. Q155 lines the (R)-pantoate pocket. ATP contacts are provided by residues I178 and 186 to 189; that span reads MSSR.

This sequence belongs to the pantothenate synthetase family. Homodimer.

It localises to the cytoplasm. It catalyses the reaction (R)-pantoate + beta-alanine + ATP = (R)-pantothenate + AMP + diphosphate + H(+). It functions in the pathway cofactor biosynthesis; (R)-pantothenate biosynthesis; (R)-pantothenate from (R)-pantoate and beta-alanine: step 1/1. In terms of biological role, catalyzes the condensation of pantoate with beta-alanine in an ATP-dependent reaction via a pantoyl-adenylate intermediate. This chain is Pantothenate synthetase, found in Roseobacter denitrificans (strain ATCC 33942 / OCh 114) (Erythrobacter sp. (strain OCh 114)).